A 468-amino-acid chain; its full sequence is UDP-N-acetylmuramate--L-alanine ligase (468 aa).

ATP is bound at residue 121-127 (GSHGKTT).

Belongs to the MurCDEF family.

It is found in the cytoplasm. The catalysed reaction is UDP-N-acetyl-alpha-D-muramate + L-alanine + ATP = UDP-N-acetyl-alpha-D-muramoyl-L-alanine + ADP + phosphate + H(+). It functions in the pathway cell wall biogenesis; peptidoglycan biosynthesis. In terms of biological role, cell wall formation. The protein is UDP-N-acetylmuramate--L-alanine ligase of Borrelia garinii subsp. bavariensis (strain ATCC BAA-2496 / DSM 23469 / PBi) (Borreliella bavariensis).